The sequence spans 486 residues: Malonate-semialdehyde dehydrogenase (486 aa).

NAD(+)-binding residues include phenylalanine 154, lysine 178, glutamate 181, arginine 182, and serine 231. Cysteine 286 (nucleophile) is an active-site residue. Glutamate 386 lines the NAD(+) pocket.

This sequence belongs to the aldehyde dehydrogenase family. IolA subfamily. Homotetramer.

It catalyses the reaction 3-oxopropanoate + NAD(+) + CoA + H2O = hydrogencarbonate + acetyl-CoA + NADH + H(+). It carries out the reaction 2-methyl-3-oxopropanoate + NAD(+) + CoA + H2O = propanoyl-CoA + hydrogencarbonate + NADH + H(+). Its pathway is polyol metabolism; myo-inositol degradation into acetyl-CoA; acetyl-CoA from myo-inositol: step 7/7. Functionally, catalyzes the oxidation of malonate semialdehyde (MSA) and methylmalonate semialdehyde (MMSA) into acetyl-CoA and propanoyl-CoA, respectively. Is involved in a myo-inositol catabolic pathway. Bicarbonate, and not CO2, is the end-product of the enzymatic reaction. In Bacillus cereus (strain AH187), this protein is Malonate-semialdehyde dehydrogenase.